The chain runs to 568 residues: 2-succinyl-5-enolpyruvyl-6-hydroxy-3-cyclohexene-1-carboxylate synthase (568 aa).

Belongs to the TPP enzyme family. MenD subfamily. Homodimer. Mg(2+) serves as cofactor. Mn(2+) is required as a cofactor. The cofactor is thiamine diphosphate.

The enzyme catalyses isochorismate + 2-oxoglutarate + H(+) = 5-enolpyruvoyl-6-hydroxy-2-succinyl-cyclohex-3-ene-1-carboxylate + CO2. Its pathway is quinol/quinone metabolism; 1,4-dihydroxy-2-naphthoate biosynthesis; 1,4-dihydroxy-2-naphthoate from chorismate: step 2/7. The protein operates within quinol/quinone metabolism; menaquinone biosynthesis. Catalyzes the thiamine diphosphate-dependent decarboxylation of 2-oxoglutarate and the subsequent addition of the resulting succinic semialdehyde-thiamine pyrophosphate anion to isochorismate to yield 2-succinyl-5-enolpyruvyl-6-hydroxy-3-cyclohexene-1-carboxylate (SEPHCHC). This is 2-succinyl-5-enolpyruvyl-6-hydroxy-3-cyclohexene-1-carboxylate synthase from Mannheimia succiniciproducens (strain KCTC 0769BP / MBEL55E).